The chain runs to 116 residues: Large ribosomal subunit protein uL24 (116 aa).

The disordered stretch occupies residues 1–27 (MAGRKSSTPTRHKMHVKTGDTVQVISG).

It belongs to the universal ribosomal protein uL24 family. Part of the 50S ribosomal subunit.

Its function is as follows. One of two assembly initiator proteins, it binds directly to the 5'-end of the 23S rRNA, where it nucleates assembly of the 50S subunit. Functionally, one of the proteins that surrounds the polypeptide exit tunnel on the outside of the subunit. In Picosynechococcus sp. (strain ATCC 27264 / PCC 7002 / PR-6) (Agmenellum quadruplicatum), this protein is Large ribosomal subunit protein uL24.